The sequence spans 81 residues: Photosystem I iron-sulfur center (81 aa).

4Fe-4S ferredoxin-type domains lie at 2–31 (SHSV…MIPW) and 39–68 (IASA…VRVY). 8 residues coordinate [4Fe-4S] cluster: C11, C14, C17, C21, C48, C51, C54, and C58.

The eukaryotic PSI reaction center is composed of at least 11 subunits. [4Fe-4S] cluster serves as cofactor.

It localises to the plastid. The protein resides in the chloroplast thylakoid membrane. It carries out the reaction reduced [plastocyanin] + hnu + oxidized [2Fe-2S]-[ferredoxin] = oxidized [plastocyanin] + reduced [2Fe-2S]-[ferredoxin]. In terms of biological role, apoprotein for the two 4Fe-4S centers FA and FB of photosystem I (PSI); essential for photochemical activity. FB is the terminal electron acceptor of PSI, donating electrons to ferredoxin. The C-terminus interacts with PsaA/B/D and helps assemble the protein into the PSI complex. Required for binding of PsaD and PsaE to PSI. PSI is a plastocyanin-ferredoxin oxidoreductase, converting photonic excitation into a charge separation, which transfers an electron from the donor P700 chlorophyll pair to the spectroscopically characterized acceptors A0, A1, FX, FA and FB in turn. The polypeptide is Photosystem I iron-sulfur center (Spinacia oleracea (Spinach)).